The sequence spans 397 residues: Elongation factor Tu (397 aa).

One can recognise a tr-type G domain in the interval 10–207 (KPHVNIGTIG…VLDEYVKEPV (198 aa)). Positions 19–26 (GHIDHGKT) are G1. A GTP-binding site is contributed by 19 to 26 (GHIDHGKT). T26 is a Mg(2+) binding site. The G2 stretch occupies residues 60-64 (GITIS). The tract at residues 81 to 84 (DCPG) is G3. GTP is bound by residues 81–85 (DCPGH) and 136–139 (NKCD). The tract at residues 136-139 (NKCD) is G4. The interval 174–176 (SAL) is G5.

This sequence belongs to the TRAFAC class translation factor GTPase superfamily. Classic translation factor GTPase family. EF-Tu/EF-1A subfamily. As to quaternary structure, monomer.

The protein localises to the cytoplasm. It carries out the reaction GTP + H2O = GDP + phosphate + H(+). Its function is as follows. GTP hydrolase that promotes the GTP-dependent binding of aminoacyl-tRNA to the A-site of ribosomes during protein biosynthesis. This Desulforapulum autotrophicum (strain ATCC 43914 / DSM 3382 / VKM B-1955 / HRM2) (Desulfobacterium autotrophicum) protein is Elongation factor Tu.